The following is a 1169-amino-acid chain: C5a peptidase (1169 aa).

The first 31 residues, 1–31, serve as a signal peptide directing secretion; the sequence is MRKKQKLPFDKLAIALMSTSILLNAQSDIKA. Residues 33–111 form a disordered region; it reads TVTEDTPATE…ETIRDLNDPS (79 aa). Over residues 48–67 the composition is skewed to polar residues; that stretch reads PQQTAVSEEAPSSSSKETNP. In terms of domain architecture, Peptidase S8 spans 101-583; that stretch reads KETIRDLNDP…AGAVDAKKAS (483 aa). Positions 102–111 are enriched in basic and acidic residues; sequence ETIRDLNDPS. Active-site charge relay system residues include D132, H195, and S514. The tract at residues 1028 to 1135 is disordered; it reads NLLEGHSNKP…RDQLPTTNDK (108 aa). 3 stretches are compositionally biased toward basic and acidic residues: residues 1033 to 1056, 1063 to 1073, and 1080 to 1092; these read HSNK…KPEQ, PDKKPEAKPEQ, and PDKK…EKDS. A run of 4 repeats spans residues 1036–1052, 1053–1069, 1070–1086, and 1087–1103. The 4 X 17 AA tandem repeats stretch occupies residues 1036–1103; the sequence is KPEQDGSDQV…GQTPGKTPQK (68 aa). The segment covering 1093-1108 has biased composition (polar residues); it reads SGQTPGKTPQKGQPSR. The LPXTG sorting signal signature appears at 1129 to 1133; that stretch reads LPTTN. Pentaglycyl murein peptidoglycan amidated threonine is present on T1132. Residues 1133 to 1169 constitute a propeptide, removed by sortase; the sequence is NDKDTNRLHLLKLVMTTFFFGLVAHIFKTKRQKETKK.

The protein belongs to the peptidase S8 family. In terms of processing, cleaved by SpeB protease; leading to its degradation. Degradation by SpeB is probably strictly regulated to preserve integrity of C5a peptidase.

Its subcellular location is the secreted. The protein resides in the cell wall. It catalyses the reaction The primary cleavage site is at 67-His-|-Lys-68 in human C5a with a minor secondary cleavage site at 58-Ala-|-Ser-59.. In terms of biological role, this virulence factor of S.pyogenes specifically cleaves the human serum chemotaxin C5a at '68-Lys-|-Asp-69' bond near its C-terminus, destroying its ability to serve as a chemoattractant. The protein is C5a peptidase (scpA) of Streptococcus pyogenes serotype M3 (strain ATCC BAA-595 / MGAS315).